A 550-amino-acid polypeptide reads, in one-letter code: MTMAACYANYDMSSLSHGMSALSALQQQQQQQQQQHSQTQQQHHHQQQQQHMYHAAVAAHQQQLLQQQQQQQHHRHHHQPANTSSSSNSRHSHAAATQTQVAAAVANSRQQQQQQQQQQQQQQQQQTASSNSNAAPAPSPQKDYSIPLHVDCSVEYELPNQPKPPAGQRVEPLLMIHPCYFRKMESQRRSPFVNNMHATARAVSSSSLSSGAALGGGGSGAAVATAPSSSAARRGARAATSAQQQQQQQQRYQQQQQQLRQQHQQMSQMSQQAHYPQQQSSLVRQHQQQQQQQQQQQRASSNQSQRQSQSQSQSQSHAANSAAAAAAQASIAAAAAGQWDQLAALAARTALTPHHMLHPHSHYAAKGSGGGAGGGKRDAMISGSYGQTAVASGKLQQSQVQQQQPQQQQQHCLPPPPWDATSMLMDRSPMATVPSNYQAGPDTNPMRLYSATPTAGAASGGSASVGGGGAVSGAGATGAVNTATDKLSGKYRQYLRSQRMHPYAAAASLNLAAAAAAAGQTSFVPFSSAATAVAATPTFQHLPQISCYNV.

Coiled-coil stretches lie at residues 20 to 44 (SALSALQQQQQQQQQQHSQTQQQHH), 105 to 126 (VANSRQQQQQQQQQQQQQQQQQ), and 239 to 274 (ATSAQQQQQQQQRYQQQQQQLRQQHQQMSQMSQQAH). 4 disordered regions span residues 21–145 (ALSA…KDYS), 208–320 (LSSG…HAAN), 361–380 (SHYAAKGSGGGAGGGKRDAM), and 392–465 (SGKL…SASV). 3 stretches are compositionally biased toward low complexity: residues 24–71 (ALQQ…QQQQ), 81–136 (ANTS…NAAP), and 221–320 (AAVA…HAAN). 2 stretches are compositionally biased toward low complexity: residues 396–412 (QQSQVQQQQPQQQQQHC) and 450–462 (SATPTAGAASGGS).

In terms of assembly, homodimer. Interacts with esc, Trl, E(z), scm and ph-p in vitro. Found in vivo in an esc-containing complex, which may be the Esc/E(z) complex. Also found in vivo in a Pc-containing complex that may be the PRC1 complex, but does not interact with Pc directly. Interacts with cyclin CycG.

The protein resides in the nucleus. It is found in the cytoplasm. Its subcellular location is the cytoskeleton. It localises to the microtubule organizing center. The protein localises to the centrosome. The protein resides in the chromosome. In terms of biological role, essential protein required for proper condensation of mitotic chromosomes and progression through mitosis. Binds to specific polytene chromosome sites, many of which are shared with the posterior sex combs (Psc) protein. Involved in maintaining Abd-B repression outside its normal expression domain. The sequence is that of Centrosomal and chromosomal factor (corto) from Drosophila melanogaster (Fruit fly).